A 513-amino-acid chain; its full sequence is Glutamyl-tRNA(Gln) amidotransferase subunit A (513 aa).

Active-site charge relay system residues include Lys-85 and Ser-160. Ser-184 acts as the Acyl-ester intermediate in catalysis.

Belongs to the amidase family. GatA subfamily. As to quaternary structure, heterotrimer of A, B and C subunits.

It catalyses the reaction L-glutamyl-tRNA(Gln) + L-glutamine + ATP + H2O = L-glutaminyl-tRNA(Gln) + L-glutamate + ADP + phosphate + H(+). Its function is as follows. Allows the formation of correctly charged Gln-tRNA(Gln) through the transamidation of misacylated Glu-tRNA(Gln) in organisms which lack glutaminyl-tRNA synthetase. The reaction takes place in the presence of glutamine and ATP through an activated gamma-phospho-Glu-tRNA(Gln). The sequence is that of Glutamyl-tRNA(Gln) amidotransferase subunit A from Bifidobacterium longum (strain NCC 2705).